A 230-amino-acid polypeptide reads, in one-letter code: uncharacterized protein (230 aa).

An ABC transporter domain is found at 2–230 (IQLSNVRKSY…ASSGQRSVGE (229 aa)). 38-45 (GPSGSGKS) serves as a coordination point for ATP.

The protein belongs to the ABC transporter superfamily. Part of a complex composed of YknX, YknY and YknZ. The complex interacts with YknW.

It localises to the cell membrane. In terms of biological role, part of an unusual four-component transporter, which is required for protection against the killing factor SdpC (sporulation-delaying protein). This is an uncharacterized protein from Bacillus subtilis (strain 168).